The primary structure comprises 27 residues: Secretin (27 aa).

Leucine 27 bears the Leucine amide mark.

It belongs to the glucagon family.

The protein localises to the secreted. In terms of biological role, hormone involved in different processes, such as regulation of the pH of the duodenal content, food intake and water homeostasis. Exerts its biological effects by binding to secretin receptor (SCTR), a G-protein coupled receptor expressed in the basolateral domain of several cells. Acts as a key gastrointestinal hormone by regulating the pH of the duodenal content. Secreted by S cells of the duodenum in the crypts of Lieberkuehn and regulates the pH of the duodenum by (1) inhibiting the secretion of gastric acid from the parietal cells of the stomach and (2) stimulating the production of bicarbonate (NaHCO(3)) from the ductal cells of the pancreas. Production of bicarbonate is essential to neutralize the pH and ensure no damage is done to the small intestine by the gastric acid. In addition to regulating the pH of the duodenal content, plays a central role in diet induced thermogenesis: acts as a non-sympathetic brown fat (BAT) activator mediating prandial thermogenesis, which consequentially induces satiation. Mechanistically, secretin released by the gut after a meal binds to secretin receptor (SCTR) in brown adipocytes, activating brown fat thermogenesis by stimulating lipolysis, which is sensed in the brain and promotes satiation. Also able to stimulate lipolysis in white adipocytes. Also plays an important role in cellular osmoregulation: released into the systemic circulation in response to hyperosmolality and acts at different levels in the hypothalamus, pituitary and kidney to regulate water homeostasis. Also plays a role in the central nervous system, possibly by acting as a neuropeptide hormone: required for hippocampal synaptic function and neural progenitor cells maintenance. The sequence is that of Secretin from Oryctolagus cuniculus (Rabbit).